A 718-amino-acid polypeptide reads, in one-letter code: F-box/LRR-repeat protein 18 (718 aa).

The 48-residue stretch at 25–72 folds into the F-box domain; sequence GVHLLGFSDEILLHILSHVPSTDLILNVRRTCRKLAALCLDKSLIHTV. LRR repeat units lie at residues 77-103, 104-128, 129-153, 177-201, 324-352, 367-392, 393-422, 468-492, 516-540, 542-567, 572-597, and 599-623; these read DYQA…SMAG, CYWL…NLSG, CHLT…AIDV, KQTL…LLYF, CTLS…NLSG, EDDI…NLSA, AHHH…SLPV, CPQP…ELIG, AQSV…TLAQ, PSVL…SLAN, GKVV…RLEQ, and YFSA…CLVS.

Directly interacts with SKP1 and CUL1.

Substrate-recognition component of the SCF (SKP1-CUL1-F-box protein)-type E3 ubiquitin ligase complex. The polypeptide is F-box/LRR-repeat protein 18 (FBXL18) (Homo sapiens (Human)).